Reading from the N-terminus, the 113-residue chain is Large ribosomal subunit protein uL22 (113 aa).

This sequence belongs to the universal ribosomal protein uL22 family. Part of the 50S ribosomal subunit.

In terms of biological role, this protein binds specifically to 23S rRNA; its binding is stimulated by other ribosomal proteins, e.g. L4, L17, and L20. It is important during the early stages of 50S assembly. It makes multiple contacts with different domains of the 23S rRNA in the assembled 50S subunit and ribosome. The globular domain of the protein is located near the polypeptide exit tunnel on the outside of the subunit, while an extended beta-hairpin is found that lines the wall of the exit tunnel in the center of the 70S ribosome. In Carboxydothermus hydrogenoformans (strain ATCC BAA-161 / DSM 6008 / Z-2901), this protein is Large ribosomal subunit protein uL22.